The sequence spans 1058 residues: Carbamoyl phosphate synthase large chain (1058 aa).

The carboxyphosphate synthetic domain stretch occupies residues 1-401 (MPKRTDIQKI…SLLKACRSLE (401 aa)). ATP is bound by residues Arg-129, Arg-169, Gly-175, Gly-176, Arg-208, Ile-210, Glu-215, Gly-241, Ile-242, His-243, Gln-284, and Glu-298. The 195-residue stretch at 133–327 (KQLMEELEQP…IAKLAAKIAV (195 aa)) folds into the ATP-grasp 1 domain. Mg(2+)-binding residues include Gln-284, Glu-298, and Asn-300. Mn(2+)-binding residues include Gln-284, Glu-298, and Asn-300. The tract at residues 402-546 (IGVHHNEIPE…YSTYGWENES (145 aa)) is oligomerization domain. The tract at residues 547–929 (IRSDKESVLV…ALYKAFEASY (383 aa)) is carbamoyl phosphate synthetic domain. An ATP-grasp 2 domain is found at 671–861 (EQALKELDIP…MAQVATKLIL (191 aa)). ATP is bound by residues Arg-707, Ser-746, Ile-748, Glu-752, Gly-777, Val-778, His-779, Ser-780, Gln-820, and Glu-832. Residues Gln-820, Glu-832, and Asn-834 each contribute to the Mg(2+) site. Mn(2+) contacts are provided by Gln-820, Glu-832, and Asn-834. Positions 930-1058 (LHLPTFGNVV…ESRSFVTEAI (129 aa)) constitute an MGS-like domain. The segment at 930–1058 (LHLPTFGNVV…ESRSFVTEAI (129 aa)) is allosteric domain.

Belongs to the CarB family. Composed of two chains; the small (or glutamine) chain promotes the hydrolysis of glutamine to ammonia, which is used by the large (or ammonia) chain to synthesize carbamoyl phosphate. Tetramer of heterodimers (alpha,beta)4. The cofactor is Mg(2+). It depends on Mn(2+) as a cofactor.

It carries out the reaction hydrogencarbonate + L-glutamine + 2 ATP + H2O = carbamoyl phosphate + L-glutamate + 2 ADP + phosphate + 2 H(+). It catalyses the reaction hydrogencarbonate + NH4(+) + 2 ATP = carbamoyl phosphate + 2 ADP + phosphate + 2 H(+). The protein operates within amino-acid biosynthesis; L-arginine biosynthesis; carbamoyl phosphate from bicarbonate: step 1/1. It participates in pyrimidine metabolism; UMP biosynthesis via de novo pathway; (S)-dihydroorotate from bicarbonate: step 1/3. Large subunit of the glutamine-dependent carbamoyl phosphate synthetase (CPSase). CPSase catalyzes the formation of carbamoyl phosphate from the ammonia moiety of glutamine, carbonate, and phosphate donated by ATP, constituting the first step of 2 biosynthetic pathways, one leading to arginine and/or urea and the other to pyrimidine nucleotides. The large subunit (synthetase) binds the substrates ammonia (free or transferred from glutamine from the small subunit), hydrogencarbonate and ATP and carries out an ATP-coupled ligase reaction, activating hydrogencarbonate by forming carboxy phosphate which reacts with ammonia to form carbamoyl phosphate. The sequence is that of Carbamoyl phosphate synthase large chain from Streptococcus pneumoniae serotype 2 (strain D39 / NCTC 7466).